A 360-amino-acid chain; its full sequence is Protein Wnt-2 (360 aa).

A signal peptide spans 1–26 (MNSSSLFGIWLSVPLILSWVTPQVSS). 11 disulfide bridges follow: C76/C87, C127/C135, C137/C157, C206/C220, C208/C215, C278/C309, C294/C304, C308/C348, C324/C339, C326/C336, and C331/C332. S212 carries O-palmitoleoyl serine; by PORCN lipidation. N295 carries N-linked (GlcNAc...) asparagine glycosylation.

Belongs to the Wnt family. Post-translationally, palmitoleoylation is required for efficient binding to frizzled receptors. Depalmitoleoylation leads to Wnt signaling pathway inhibition.

Its subcellular location is the secreted. The protein resides in the extracellular space. It localises to the extracellular matrix. Ligand for members of the frizzled family of seven transmembrane receptors. Functions in the canonical Wnt signaling pathway that results in activation of transcription factors of the TCF/LEF family. Functions as a upstream regulator of FGF10 expression. Plays an important role in embryonic lung development. May contribute to embryonic brain development by regulating the proliferation of dopaminergic precursors and neurons. This Monodelphis domestica (Gray short-tailed opossum) protein is Protein Wnt-2 (WNT2).